The sequence spans 236 residues: Phosphoribosylaminoimidazole-succinocarboxamide synthase (236 aa).

The protein belongs to the SAICAR synthetase family.

It carries out the reaction 5-amino-1-(5-phospho-D-ribosyl)imidazole-4-carboxylate + L-aspartate + ATP = (2S)-2-[5-amino-1-(5-phospho-beta-D-ribosyl)imidazole-4-carboxamido]succinate + ADP + phosphate + 2 H(+). The protein operates within purine metabolism; IMP biosynthesis via de novo pathway; 5-amino-1-(5-phospho-D-ribosyl)imidazole-4-carboxamide from 5-amino-1-(5-phospho-D-ribosyl)imidazole-4-carboxylate: step 1/2. In Campylobacter jejuni subsp. jejuni serotype O:2 (strain ATCC 700819 / NCTC 11168), this protein is Phosphoribosylaminoimidazole-succinocarboxamide synthase.